The following is a 297-amino-acid chain: Aspartate carbamoyltransferase catalytic subunit (297 aa).

The carbamoyl phosphate site is built by R51 and T52. Position 79 (K79) interacts with L-aspartate. Carbamoyl phosphate contacts are provided by R101, H130, and Q133. R163 and R215 together coordinate L-aspartate. Carbamoyl phosphate contacts are provided by G256 and P257.

This sequence belongs to the aspartate/ornithine carbamoyltransferase superfamily. ATCase family. In terms of assembly, heterododecamer (2C3:3R2) of six catalytic PyrB chains organized as two trimers (C3), and six regulatory PyrI chains organized as three dimers (R2).

The enzyme catalyses carbamoyl phosphate + L-aspartate = N-carbamoyl-L-aspartate + phosphate + H(+). The protein operates within pyrimidine metabolism; UMP biosynthesis via de novo pathway; (S)-dihydroorotate from bicarbonate: step 2/3. In terms of biological role, catalyzes the condensation of carbamoyl phosphate and aspartate to form carbamoyl aspartate and inorganic phosphate, the committed step in the de novo pyrimidine nucleotide biosynthesis pathway. The sequence is that of Aspartate carbamoyltransferase catalytic subunit from Ehrlichia ruminantium (strain Gardel).